A 212-amino-acid polypeptide reads, in one-letter code: Large ribosomal subunit protein uL3 (212 aa).

Gln152 carries the N5-methylglutamine modification.

The protein belongs to the universal ribosomal protein uL3 family. In terms of assembly, part of the 50S ribosomal subunit. Forms a cluster with proteins L14 and L19. Post-translationally, methylated by PrmB.

One of the primary rRNA binding proteins, it binds directly near the 3'-end of the 23S rRNA, where it nucleates assembly of the 50S subunit. In Marinomonas sp. (strain MWYL1), this protein is Large ribosomal subunit protein uL3.